We begin with the raw amino-acid sequence, 533 residues long: MKRDHHHHHHQDKKTMMMNEEDDGNGMDELLAVLGYKVRSSEMADVAQKLEQLEVMMSNVQEDDLSQLATETVHYNPAELYTWLDSMLTDLNPPSSNAEYDLKAIPGDAILNQFAIDSASSSNQGGGGDTYTTNKRLKCSNGVVETTTATAESTRHVVLVDSQENGVRLVHALLACAEAVQKENLTVAEALVKQIGFLAVSQIGAMRKVATYFAEALARRIYRLSPSQSPIDHSLSDTLQMHFYETCPYLKFAHFTANQAILEAFQGKKRVHVIDFSMSQGLQWPALMQALALRPGGPPVFRLTGIGPPAPDNFDYLHEVGCKLAHLAEAIHVEFEYRGFVANTLADLDASMLELRPSEIESVAVNSVFELHKLLGRPGAIDKVLGVVNQIKPEIFTVVEQESNHNSPIFLDRFTESLHYYSTLFDSLEGVPSGQDKVMSEVYLGKQICNVVACDGPDRVERHETLSQWRNRFGSAGFAAAHIGSNAFKQASMLLALFNGGEGYRVEESDGCLMLGWHTRPLIATSAWKLSTN.

The segment covering 1–12 (MKRDHHHHHHQD) has biased composition (basic residues). The disordered stretch occupies residues 1 to 24 (MKRDHHHHHHQDKKTMMMNEEDDG). The DELLA motif motif lies at 28–32 (DELLA). Positions 50 to 54 (LEQLE) match the LEXLE motif motif. Positions 73–77 (VHYNP) match the VHYNP motif motif. Residues 160 to 529 (VDSQENGVRL…RPLIATSAWK (370 aa)) form the GRAS domain. Positions 167–221 (VRLVHALLACAEAVQKENLTVAEALVKQIGFLAVSQIGAMRKVATYFAEALARRI) are leucine repeat I (LRI). Residues 174-178 (LACAE) carry the LxCxE motif motif. The interval 240–305 (QMHFYETCPY…GGPPVFRLTG (66 aa)) is VHIID. A VHIID motif is present at residues 271-275 (VHVID). The leucine repeat II (LRII) stretch occupies residues 319–351 (EVGCKLAHLAEAIHVEFEYRGFVANTLADLDAS). The segment at 363–450 (VAVNSVFELH…EVYLGKQICN (88 aa)) is PFYRE. The LXXLL motif motif lies at 371-375 (LHKLL). The tract at residues 453–529 (ACDGPDRVER…RPLIATSAWK (77 aa)) is SAW.

This sequence belongs to the GRAS family. DELLA subfamily. In terms of assembly, interacts directly with the GID2/SLY1 component of the SCF(GID2) complex. Interacts (via N-terminus) with GID1A, GID1B and GID1B (via N-terminus). Interacts with the BOI proteins BOI, BRG1, BRG2, BRG3 and NUP58. Interacts with TOPP4. Interacts with TCP14 and TCP15. Interacts with FLZ5. Binds to and coactivates GAF1/IDD2 and ENY/IDD1 at the promoter of GA20OX2 gene. Binds to PDF2 and ATML1. Interacts with the prefoldin alpha subunits PFD3 and PFD5 in the nucleus. Phosphorylated. In terms of processing, gibberellin (GA) induces dephosphorylation of GAI by TOPP4 and subsequent degradation by the proteasomal pathway. Post-translationally, may be ubiquitinated, as suggested by its interaction with GID2. Ubiquitination is however unsure since in contrast to other DELLA proteins, it is not ubiquitinated and degraded upon GA application. Nevertheless, ubiquitination may be triggered by other processes. As to expression, ubiquitously expressed. Expressed in rosette leaves, roots, stems and inflorescences of greenhouse grown.

It is found in the nucleus. Transcription activation is repressed by gibberellic acid GA(3) in the presence of TPR4. Transcriptional regulator that acts as a repressor of the gibberellin (GA) signaling pathway. Transcription coactivator of the zinc finger transcription factors GAF1/IDD2 and ENY/IDD1 in regulation of gibberellin homeostasis and signaling. No effect of the BOI proteins on its stability. Probably acts by participating in large multiprotein complexes that repress transcription of GA-inducible genes. Positively regulates XERICO expression. In contrast to RGA, it is less sensitive to GA. Its activity is probably regulated by other phytohormones such as auxin and ethylene. Involved in the regulation of seed dormancy and germination, including glucose-induced delay of seed germination. Involved in the process leading to microtubules (MTs) dissociation in response to gibberellic acid (GA) probably by mediating the translocation of the prefoldin co-chaperone complex from the cytoplasm to the nucleus. This is DELLA protein GAI from Arabidopsis thaliana (Mouse-ear cress).